The following is a 581-amino-acid chain: Multidrug and toxin extrusion protein 2 (581 aa).

Residues 1–33 (MDSLQDTVPLDHGGCCPALSRLVPRGFGTEMWT) are Cytoplasmic-facing. A helical transmembrane segment spans residues 34-54 (LFALSGPLFLFQVLTFMIYIV). The Extracellular portion of the chain corresponds to 55–66 (STVFCGHLGKVE). A helical transmembrane segment spans residues 67 to 87 (LASVTLAVAFVNVCGVSVGVG). The Cytoplasmic segment spans residues 88-119 (LSSACDTLMSQSFGSPNKKHVGVILQRGALVL). The helical transmembrane segment at 120–140 (LLCCLPCWALFLNTQHILLLF) threads the bilayer. The Extracellular segment spans residues 141–153 (RQDPEVSRLTQDY). A helical transmembrane segment spans residues 154–174 (VMIFIPGLPVIFLYNLLAKYL). Over 175–183 (QNQKITWPQ) the chain is Cytoplasmic. Residues 184–204 (VLSGVVGNCVNGVANYALVSV) form a helical membrane-spanning segment. Topologically, residues 205-212 (LNLGVRGS) are extracellular. A helical membrane pass occupies residues 213 to 233 (AYANIISQFAQTVFLLLYIVL). Topologically, residues 234–253 (KKLHLETWAGWSSQCLQDWG) are cytoplasmic. The chain crosses the membrane as a helical span at residues 254–273 (PFFSLAVPSMLMICVEWWAY). Topologically, residues 274–317 (EIGSFLMGLLSVVDLSAQAVIYEVATVTYMRHSHHLAYTAHVAR) are extracellular. The helical transmembrane segment at 318–338 (IPLGLSIGVCVRVGMALGAAD) threads the bilayer. Residues 339 to 346 (TVQAKRSA) lie on the Cytoplasmic side of the membrane. The chain crosses the membrane as a helical span at residues 347–367 (VSGVLSIVGISLVLGTLISIL). The Extracellular segment spans residues 368-380 (KNQLGHIFTNDED). A helical membrane pass occupies residues 381–401 (VIALVSQVLPVYSVFHVFEAI). The Cytoplasmic portion of the chain corresponds to 402 to 420 (CCVYGGVLRGTGKQAFGAA). A helical membrane pass occupies residues 421 to 441 (VNAITYYIIGLPLGILLTFVV). The Extracellular segment spans residues 442–444 (RMR). The chain crosses the membrane as a helical span at residues 445-465 (IMGLWLGMLACVFLATAAFVA). The Cytoplasmic segment spans residues 466 to 557 (YTARLDWKLA…LSVKQLVIRR (92 aa)). The tract at residues 481 to 513 (KHSGQQQQQQRAESTATRSGPEKAVLSSVATGS) is disordered. Residues 558-578 (GAALGAASATLMVGLTVRILA) traverse the membrane as a helical segment. Topologically, residues 579–581 (TRH) are extracellular.

This sequence belongs to the multi antimicrobial extrusion (MATE) (TC 2.A.66.1) family.

The protein localises to the cell membrane. It is found in the apical cell membrane. The enzyme catalyses thiamine(out) + H(+)(in) = thiamine(in) + H(+)(out). The catalysed reaction is estrone 3-sulfate(in) + H(+)(out) = estrone 3-sulfate(out) + H(+)(in). It carries out the reaction creatinine(in) + H(+)(out) = creatinine(out) + H(+)(in). Functionally, multidrug efflux pump that functions as a H(+)/organic cation antiporter. Mediates the efflux of cationic compounds, such as the model cations, tetraethylammonium (TEA) and 1-methyl-4-phenylpyridinium (MPP+), the platinum-based drug oxaliplatin or weak bases that are positively charged at physiological pH, cimetidine or the antidiabetic drug metformin. Mediates the efflux of the endogenous compounds creatinine, thiamine and estrone-3-sulfate. Plays a physiological role in the excretion of drugs, toxins and endogenous metabolites through the kidney. This is Multidrug and toxin extrusion protein 2 (SLC47A2) from Pongo abelii (Sumatran orangutan).